A 241-amino-acid chain; its full sequence is Histone H1-II (241 aa).

Positions 1-10 are enriched in basic and acidic residues; that stretch reads MASDAPEVKA. 2 disordered regions span residues 1-27 and 89-241; these read MASD…THPP and NSYK…AKKA. Over residues 11 to 20 the composition is skewed to basic residues; that stretch reads PKAKTQKKPK. The 72-residue stretch at 24–95 folds into the H15 domain; that stretch reads THPPYIQMVT…KVKNSYKLSD (72 aa). Over residues 99-111 the composition is skewed to basic residues; it reads SKAKAAAKPKAAP. Repeat copies occupy residues 111 to 116, 117 to 122, and 123 to 128. The segment at 111–217 is 8 X 6 AA repeats of P-K-K-A-[AK]-A; that stretch reads PKKAAAPKKA…KAATPKKAKA (107 aa). Residues 129–155 are compositionally biased toward basic and acidic residues; that stretch reads PKKEGEKKAVKPKSEKKAAKPKTEKKP. 2 stretches are compositionally biased toward basic residues: residues 156–184 and 194–241; these read KAAK…KATP and AAPK…AKKA. A DNA-binding region spans residues 183–186; the sequence is TPKK. Repeat copies occupy residues 184–189, 190–195, 196–201, 204–209, and 212–217. 2 consecutive DNA-binding regions follow at residues 203 to 206 and 211 to 214; these read TPKK.

The protein belongs to the histone H1/H5 family.

It localises to the nucleus. Its subcellular location is the chromosome. Its function is as follows. Histones H1 are necessary for the condensation of nucleosome chains into higher-order structures. This chain is Histone H1-II (H1-II), found in Volvox carteri (Green alga).